The following is a 94-amino-acid chain: Small ribosomal subunit protein bS18 (94 aa).

It belongs to the bacterial ribosomal protein bS18 family. In terms of assembly, part of the 30S ribosomal subunit. Forms a tight heterodimer with protein bS6.

In terms of biological role, binds as a heterodimer with protein bS6 to the central domain of the 16S rRNA, where it helps stabilize the platform of the 30S subunit. The chain is Small ribosomal subunit protein bS18 from Acetivibrio thermocellus (strain ATCC 27405 / DSM 1237 / JCM 9322 / NBRC 103400 / NCIMB 10682 / NRRL B-4536 / VPI 7372) (Clostridium thermocellum).